A 984-amino-acid polypeptide reads, in one-letter code: MLSNVGHSIQKMINNIPVAITANETSTAAVTSGGNVYQTGLIGGKIHYSFNEVITNENIVGKVIDVKATEDRLYLLNNSGSVFEYAYNAGSCSPVVREVYSPAACGGDKAVQIEAGRAHILIKTEAGKIWGAGSNAQYQLVPQGQVRYDTAVEIIVTDTNLHDNECPGSFTGVYNELECPVIPNCEKDKCDISCVKENLCDVHLGYINVSHLALNPPCETGTLSVPVYGDINYVGFLCVDNKGCATGSVTYTINHLYIKCGCLLGKFTHKDKCGCHVRELNLSSTCQVNIFQANPCPSANTDLCALTGSAPITGTTQISGKCGSCVIANVDIPIDFPLPSVSFEATCNTIVLEYNDCKTSITVLCDGTLCDYCECATTLDLDFDVPLKCEAPKPIKPQIELPQPCWAGIYAGYDISVLVDNCNRIYVYGSLHNIRSNKDLLKRSCLEELLKGTNASISFPADQLNCANHTARNDNCKCPKCRDKAFKTDLNKFGIHLSFPNSEDECSQKNMSVCDFLQNLKNCNDAQGCEPTCEPCDGYIYLNVAGDCGCPCGAPASAPIGSITLFNKKSICKLVSQNCPDISEVAIDVSTIVEFDLNKYCIDTRDIALDKVVKLQFCNDGPNVNVYIDIDKPGGIKFTSNGKKCNVEFTVSASTQNHQYILNFGSILDPVELTNLKYALSLDCYYPCPKYKNPFDTKITNTYIRGGDHIKFVVSNPKNIRQAVTADIPTVFRLNRRVIDVGVGYNNLTVLVGGLACPNEIYVIGSNCHGELGLGTNETIVSWRQLNRCIFDCQVNRVFSGRYVTFYITQSNNVYAAGQWKCFINSTTPQIVKSICPAWRISDMAITLNQIILLGADGCIFGLGDNHLGELGLCHTDCVTKPTPISFFYKLNNSAIKQFNDSLAHPMERNNRKCNRPFNPCEFGNFGGPCAPGPCGPFGPFGPSGPGPNQGPGDDYNNFKSTKYPRNGYNKYQPNNRIHSRNRY.

Residues 941 to 984 are disordered; it reads FGPSGPGPNQGPGDDYNNFKSTKYPRNGYNKYQPNNRIHSRNRY.

Its subcellular location is the virion. This is an uncharacterized protein from Acanthamoeba polyphaga (Amoeba).